The primary structure comprises 231 residues: Aquaporin Z (231 aa).

2 consecutive transmembrane segments (helical) span residues 11–31 (FLGT…AAAF) and 36–56 (IGLL…AFAI). The NPA 1 motif lies at 65–67 (NPA). A run of 3 helical transmembrane segments spans residues 84-104 (LPYI…LYLI), 132-152 (MISV…VILG), and 161-181 (GFAP…SIPI). Positions 187 to 189 (NPA) match the NPA 2 motif. A helical membrane pass occupies residues 203 to 223 (VSQLWLFWAAPIIGAILAGVI).

Belongs to the MIP/aquaporin (TC 1.A.8) family. Homotetramer.

The protein resides in the cell inner membrane. It carries out the reaction H2O(in) = H2O(out). Functionally, channel that permits osmotically driven movement of water in both directions. It is involved in the osmoregulation and in the maintenance of cell turgor during volume expansion in rapidly growing cells. It mediates rapid entry or exit of water in response to abrupt changes in osmolarity. The chain is Aquaporin Z from Shewanella oneidensis (strain ATCC 700550 / JCM 31522 / CIP 106686 / LMG 19005 / NCIMB 14063 / MR-1).